We begin with the raw amino-acid sequence, 570 residues long: D-xylulose kinase A (570 aa).

Substrate is bound by residues His95, Arg166, Asp282, and Asn283. ATP-binding positions include Trp364, 469–470, and Asn473; that span reads GG.

It belongs to the FGGY kinase family.

Its subcellular location is the cytoplasm. The enzyme catalyses D-xylulose + ATP = D-xylulose 5-phosphate + ADP + H(+). Its function is as follows. Highly specific D-xylulose kinase which participates in the catabolism of xylose. Xylose is a major component of hemicelluloses such as xylan. Most fungi utilize D-xylose via three enzymatic reactions, xylose reductase (XR), xylitol dehydrogenase (XDH), and xylulokinase, to form xylulose 5-phosphate, which enters pentose phosphate pathway. In Aspergillus niger, this protein is D-xylulose kinase A (xkiA).